The sequence spans 330 residues: uncharacterized protein (330 aa).

This sequence belongs to the ornithine cyclodeaminase/mu-crystallin family.

The protein localises to the cytoplasm. This is an uncharacterized protein from Schizosaccharomyces pombe (strain 972 / ATCC 24843) (Fission yeast).